The following is a 225-amino-acid chain: Late embryogenesis abundant protein 29 (225 aa).

2 disordered regions span residues 1-167 and 193-225; these read MASN…GGFL and TEEE…YQRK. Basic and acidic residues-rich tracts occupy residues 28-39, 49-61, 71-83, and 93-119; these read MRDKAEEGRDKT, KAHE…KDKT, KAHE…KEKT, and KAHE…KDKA. 3 LEA 11-mer repeat repeats span residues 53-63, 75-85, and 97-107; these read TAQSAKDKTSQ, TAQSAKEKTSQ, and TTQAAKEKTSQ. Residues 141 to 153 are compositionally biased toward polar residues; it reads TKETAQGAAQYTK. The span at 154–163 shows a compositional bias: basic and acidic residues; that stretch reads ETAEAGRDKT. Residues 205-225 show a composition bias toward low complexity; that stretch reads TTTTTATTRTTDPTHQTYQRK.

This sequence belongs to the LEA type 4 family.

It localises to the cytoplasm. Its subcellular location is the cytosol. Involved dehydration tolerance. This chain is Late embryogenesis abundant protein 29, found in Arabidopsis thaliana (Mouse-ear cress).